Consider the following 880-residue polypeptide: Valine--tRNA ligase (880 aa).

Residues 47-57 (PNITGKLHLGH) carry the 'HIGH' region motif. The 'KMSKS' region motif lies at 526 to 530 (KMSKS). K529 provides a ligand contact to ATP. Residues 810–845 (LLDLVDREKELERLNKEKTKLEGEILRVEKKLSNER) are a coiled coil.

The protein belongs to the class-I aminoacyl-tRNA synthetase family. ValS type 1 subfamily. As to quaternary structure, monomer.

Its subcellular location is the cytoplasm. It carries out the reaction tRNA(Val) + L-valine + ATP = L-valyl-tRNA(Val) + AMP + diphosphate. Functionally, catalyzes the attachment of valine to tRNA(Val). As ValRS can inadvertently accommodate and process structurally similar amino acids such as threonine, to avoid such errors, it has a 'posttransfer' editing activity that hydrolyzes mischarged Thr-tRNA(Val) in a tRNA-dependent manner. The protein is Valine--tRNA ligase of Clostridium perfringens (strain 13 / Type A).